The sequence spans 368 residues: Peptide chain release factor 2 (368 aa).

Gln250 bears the N5-methylglutamine mark.

This sequence belongs to the prokaryotic/mitochondrial release factor family. Post-translationally, methylated by PrmC. Methylation increases the termination efficiency of RF2.

Its subcellular location is the cytoplasm. Peptide chain release factor 2 directs the termination of translation in response to the peptide chain termination codons UGA and UAA. In Mycolicibacterium smegmatis (strain ATCC 700084 / mc(2)155) (Mycobacterium smegmatis), this protein is Peptide chain release factor 2.